A 590-amino-acid chain; its full sequence is EGF-like and EMI domain-containing protein 1 (590 aa).

An N-terminal signal peptide occupies residues 1-23 (MTSPLCFWCFCVWAAANWPPGSA). Residues 44-104 (LSRPCAQAFI…RCCPGWIQWD (61 aa)) enclose the EMI domain. One can recognise an EGF-like 1 domain in the interval 105–145 (DEPGCFSSLSSLGTHFSGRECSYQDTRQCLCSQGFHGPHCQ). 11 cysteine pairs are disulfide-bonded: cysteine 109–cysteine 125, cysteine 135–cysteine 144, cysteine 168–cysteine 179, cysteine 175–cysteine 188, cysteine 190–cysteine 203, cysteine 209–cysteine 219, cysteine 215–cysteine 228, cysteine 230–cysteine 243, cysteine 249–cysteine 260, cysteine 256–cysteine 269, and cysteine 271–cysteine 284. The 41-residue stretch at 164–204 (NVDECAVVNGGCQQRCINTLGTFHCECDTGYRRHADERTCI) folds into the EGF-like 2; calcium-binding domain. The region spanning 205-244 (KTDPCAGANGCAHLCQTENGMARCACHAGYQLSEDKKACE) is the EGF-like 3 domain. One can recognise an EGF-like 4; calcium-binding domain in the interval 245 to 285 (DINECAGELAPCAHHCVNSKGSFTCTCHPGFELGADRKHCY). The disordered stretch occupies residues 393–424 (RLAQNPPQPFPYLDPSLTASYEDEDNDDADSE). Over residues 413–424 (YEDEDNDDADSE) the composition is skewed to acidic residues. Residues 445–481 (FGLDCSLSCEDCMNGGRCQEGKSGCLCPAEWTGLICN) form the EGF-like 5 domain. Intrachain disulfides connect cysteine 449/cysteine 462, cysteine 456/cysteine 469, and cysteine 471/cysteine 480.

The polypeptide is EGF-like and EMI domain-containing protein 1 (Egfem1) (Mus musculus (Mouse)).